The sequence spans 192 residues: tRNA (cytidine(56)-2'-O)-methyltransferase (192 aa).

S-adenosyl-L-methionine-binding positions include Leu-84 and 112–116 (GGEKV).

Belongs to the aTrm56 family. In terms of assembly, homodimer.

The protein resides in the cytoplasm. It carries out the reaction cytidine(56) in tRNA + S-adenosyl-L-methionine = 2'-O-methylcytidine(56) in tRNA + S-adenosyl-L-homocysteine + H(+). Functionally, specifically catalyzes the AdoMet-dependent 2'-O-ribose methylation of cytidine at position 56 in tRNAs. This is tRNA (cytidine(56)-2'-O)-methyltransferase from Halobacterium salinarum (strain ATCC 700922 / JCM 11081 / NRC-1) (Halobacterium halobium).